A 172-amino-acid chain; its full sequence is Ly6/PLAUR domain-containing protein 6B (172 aa).

A signal peptide spans 1–25 (MLLLCHILAVTILQILIISENWVFA). The 92-residue stretch at 46–137 (FKCFTCENAG…VELPTNHTNA (92 aa)) folds into the UPAR/Ly6 domain. Positions 46–140 (FKCFTCENAG…PTNHTNAVFA (95 aa)) are sufficient for inhibiting alpha-7 nAChR currents. Disulfide bonds link Cys-48/Cys-76, Cys-51/Cys-60, Cys-69/Cys-95, Cys-101/Cys-120, Cys-106/Cys-117, and Cys-121/Cys-126. Ser-148 is lipidated: GPI-anchor amidated serine. The propeptide at 149 to 172 (GSSVSSVPSPYLLVLAWLFMLPLL) is removed in mature form.

The protein resides in the cell membrane. Functionally, likely acts as a modulator of nicotinic acetylcholine receptors (nAChRs) activity. In vitro acts on nAChRs in a subtype- and stoichiometry-dependent manner. Modulates specifically alpha-3(3):beta-4(2) nAChRs by enhancing the sensitivity to ACh, decreasing ACh-induced maximal current response and increasing the rate of desensitization to ACh; has no effect on alpha-7 homomeric nAChRs; modulates alpha-3(2):alpha-5:beta-4(2) nAChRs in the context of CHRNA5/alpha-5 variant Asn-398 but not its wild-type sequence. However, according to another report in vitro it can weakly inhibits alpha-7 nAChRs. The polypeptide is Ly6/PLAUR domain-containing protein 6B (Lypd6b) (Mus musculus (Mouse)).